Reading from the N-terminus, the 110-residue chain is U-scoloptoxin(16)-Er7a (110 aa).

The first 26 residues, 1–26 (MTSTRKLSVSCLIVFMVSSLIAVSSG), serve as a signal peptide directing secretion.

Belongs to the scoloptoxin-16 family. In terms of processing, contains 4 disulfide bonds. As to expression, expressed by the venom gland.

The protein localises to the secreted. This is U-scoloptoxin(16)-Er7a from Ethmostigmus rubripes (Giant centipede).